The chain runs to 349 residues: uncharacterized protein (349 aa).

This is an uncharacterized protein from Archaeoglobus fulgidus (strain ATCC 49558 / DSM 4304 / JCM 9628 / NBRC 100126 / VC-16).